The following is a 35-amino-acid chain: MSDIN-like toxin proprotein 6 (35 aa).

A propeptide spanning residues Met-1 to Pro-10 is cleaved from the precursor. The segment at residues Ile-11 to Pro-20 is a cross-link (cyclopeptide (Ile-Pro)). The propeptide occupies Cys-21–Arg-35.

It belongs to the MSDIN fungal toxin family. In terms of processing, processed by the macrocyclase-peptidase enzyme POPB to yield a toxic cyclic decapeptide. POPB first removes 10 residues from the N-terminus. Conformational trapping of the remaining peptide forces the enzyme to release this intermediate rather than proceed to macrocyclization. The enzyme rebinds the remaining peptide in a different conformation and catalyzes macrocyclization of the N-terminal 10 residues.

In terms of biological role, probable toxin that belongs to the MSDIN-like toxin family responsible for a large number of food poisoning cases and deaths. This is MSDIN-like toxin proprotein 6 from Amanita bisporigera (Destroying angel).